A 268-amino-acid chain; its full sequence is F-actin-capping protein subunit alpha (268 aa).

S2 carries the post-translational modification N-acetylserine. A Phosphoserine modification is found at S17.

This sequence belongs to the F-actin-capping protein alpha subunit family. In terms of assembly, component of the F-actin capping complex, composed of a heterodimer of an alpha and a beta subunit. Interacts with BSP1 (via C-terminus); leading to recruitment of the F-actin capping complex to actin cortical patches and the acomyosin contractile ring.

The protein localises to the cytoplasm. Its subcellular location is the cytoskeleton. The protein resides in the actin patch. In terms of biological role, F-actin-capping proteins bind in a Ca(2+)-independent manner to the fast growing ends of actin filaments (barbed end) thereby blocking the exchange of subunits at these ends. Unlike other capping proteins (such as gelsolin and severin), these proteins do not sever actin filaments. The chain is F-actin-capping protein subunit alpha (CAP1) from Saccharomyces cerevisiae (strain ATCC 204508 / S288c) (Baker's yeast).